The following is a 499-amino-acid chain: Protein nucleotidyltransferase YdiU (499 aa).

ATP is bound by residues glycine 95, glycine 97, arginine 98, lysine 117, aspartate 129, glycine 130, arginine 180, and arginine 187. The Proton acceptor role is filled by aspartate 256. 2 residues coordinate Mg(2+): asparagine 257 and aspartate 266. Aspartate 266 contacts ATP.

Belongs to the SELO family. Mg(2+) is required as a cofactor. Requires Mn(2+) as cofactor.

It carries out the reaction L-seryl-[protein] + ATP = 3-O-(5'-adenylyl)-L-seryl-[protein] + diphosphate. It catalyses the reaction L-threonyl-[protein] + ATP = 3-O-(5'-adenylyl)-L-threonyl-[protein] + diphosphate. The catalysed reaction is L-tyrosyl-[protein] + ATP = O-(5'-adenylyl)-L-tyrosyl-[protein] + diphosphate. The enzyme catalyses L-histidyl-[protein] + UTP = N(tele)-(5'-uridylyl)-L-histidyl-[protein] + diphosphate. It carries out the reaction L-seryl-[protein] + UTP = O-(5'-uridylyl)-L-seryl-[protein] + diphosphate. It catalyses the reaction L-tyrosyl-[protein] + UTP = O-(5'-uridylyl)-L-tyrosyl-[protein] + diphosphate. In terms of biological role, nucleotidyltransferase involved in the post-translational modification of proteins. It can catalyze the addition of adenosine monophosphate (AMP) or uridine monophosphate (UMP) to a protein, resulting in modifications known as AMPylation and UMPylation. This Dechloromonas aromatica (strain RCB) protein is Protein nucleotidyltransferase YdiU.